The following is a 644-amino-acid chain: Exoribonuclease 2 (644 aa).

The 328-residue stretch at 189-516 (RQDLTALNFV…NHRLLKAVIK (328 aa)) folds into the RNB domain. Residues 561-643 (NTRFAAEIID…ETRSIIARPA (83 aa)) enclose the S1 motif domain.

The protein belongs to the RNR ribonuclease family. RNase II subfamily.

It is found in the cytoplasm. The catalysed reaction is Exonucleolytic cleavage in the 3'- to 5'-direction to yield nucleoside 5'-phosphates.. Involved in mRNA degradation. Hydrolyzes single-stranded polyribonucleotides processively in the 3' to 5' direction. This is Exoribonuclease 2 from Salmonella typhi.